A 303-amino-acid chain; its full sequence is Recombination-associated protein RdgC (303 aa).

The protein belongs to the RdgC family.

It localises to the cytoplasm. It is found in the nucleoid. Its function is as follows. May be involved in recombination. The chain is Recombination-associated protein RdgC from Salmonella agona (strain SL483).